A 210-amino-acid chain; its full sequence is Large ribosomal subunit protein uL4 (210 aa).

The segment at 44–77 is disordered; the sequence is ARQGNASSKTRSEVRGGGRKPWRQKGTGRARAGS. Positions 60 to 71 are enriched in basic residues; it reads GGRKPWRQKGTG.

The protein belongs to the universal ribosomal protein uL4 family. Part of the 50S ribosomal subunit.

One of the primary rRNA binding proteins, this protein initially binds near the 5'-end of the 23S rRNA. It is important during the early stages of 50S assembly. It makes multiple contacts with different domains of the 23S rRNA in the assembled 50S subunit and ribosome. Functionally, forms part of the polypeptide exit tunnel. The polypeptide is Large ribosomal subunit protein uL4 (Microcystis aeruginosa (strain NIES-843 / IAM M-2473)).